A 65-amino-acid chain; its full sequence is Crotamine CRO1 (65 aa).

The first 22 residues, Met-1–Ala-22, serve as a signal peptide directing secretion. 3 cysteine pairs are disulfide-bonded: Cys-26–Cys-58, Cys-33–Cys-52, and Cys-40–Cys-59.

It belongs to the crotamine-myotoxin family. Monomer. In terms of tissue distribution, expressed by the venom gland.

The protein localises to the secreted. In terms of biological role, cationic peptide that possesses multiple functions. It acts as a cell-penetrating peptide (CPP), and as a potent voltage-gated potassium channel (Kv) inhibitor. It exhibits antimicrobial activities, hind limb paralysis, and severe muscle necrosis by a non-enzymatic mechanism. The polypeptide is Crotamine CRO1 (CRO1) (Crotalus durissus terrificus (South American rattlesnake)).